The sequence spans 516 residues: uncharacterized protein (516 aa).

A signal peptide spans 1-17 (MSVWVALALLGMCVSCT). Disordered regions lie at residues 29–197 (KEPP…EVPR) and 296–426 (RTVS…RDHL). Over residues 71 to 85 (RVPESSQEREQKPES) the composition is skewed to basic and acidic residues. Residues 122-144 (VAPPAPPAPTAPRPHRPSPPPVS) are compositionally biased toward pro residues. A compositionally biased stretch (low complexity) spans 145-155 (PSASKPKQRAV). The span at 351–367 (KAQHGTPRPDEKKDREP) shows a compositional bias: basic and acidic residues. Over residues 394 to 406 (SPASQPSAPSAAP) the composition is skewed to low complexity. Over residues 415 to 426 (AHKEGQEKRDHL) the composition is skewed to basic and acidic residues.

This is an uncharacterized protein from Treponema pallidum (strain Nichols).